Consider the following 132-residue polypeptide: Small ribosomal subunit protein uS8 (132 aa).

The protein belongs to the universal ribosomal protein uS8 family. In terms of assembly, part of the 30S ribosomal subunit. Contacts proteins S5 and S12.

Functionally, one of the primary rRNA binding proteins, it binds directly to 16S rRNA central domain where it helps coordinate assembly of the platform of the 30S subunit. The chain is Small ribosomal subunit protein uS8 from Corynebacterium kroppenstedtii (strain DSM 44385 / JCM 11950 / CIP 105744 / CCUG 35717).